Consider the following 638-residue polypeptide: XK-related protein 6 (638 aa).

Disordered stretches follow at residues 24-43 (VGSG…GGDG) and 82-117 (RSAA…PASP). Positions 33-43 (PGGGGCGGGDG) are enriched in gly residues. The next 7 membrane-spanning stretches (helical) occupy residues 127 to 147 (LWIV…LWLA), 158 to 178 (CFGL…SLSF), 315 to 335 (TLPC…LASY), 369 to 389 (VISF…FVVV), 410 to 430 (WEEI…WFNV), 439 to 459 (MFAY…LWYF), and 470 to 490 (AVPA…LMLL).

It belongs to the XK family.

The protein resides in the cell membrane. This is XK-related protein 6 from Mus musculus (Mouse).